Reading from the N-terminus, the 367-residue chain is DNA polymerase IV (367 aa).

In terms of domain architecture, UmuC spans Ile14–Gly198. Mg(2+) is bound by residues Asp18 and Asp116. Glu117 is an active-site residue.

This sequence belongs to the DNA polymerase type-Y family. As to quaternary structure, monomer. Mg(2+) is required as a cofactor.

The protein localises to the cytoplasm. It catalyses the reaction DNA(n) + a 2'-deoxyribonucleoside 5'-triphosphate = DNA(n+1) + diphosphate. Poorly processive, error-prone DNA polymerase involved in untargeted mutagenesis. Copies undamaged DNA at stalled replication forks, which arise in vivo from mismatched or misaligned primer ends. These misaligned primers can be extended by PolIV. Exhibits no 3'-5' exonuclease (proofreading) activity. May be involved in translesional synthesis, in conjunction with the beta clamp from PolIII. This Streptococcus thermophilus (strain CNRZ 1066) protein is DNA polymerase IV.